The sequence spans 178 residues: MPPRRTKKLKTIPDTLLIGSIFTIFENLEAHAYLLPEDDKILWDQYFSEFDALKYLPTRDGETLQEMLSEGAPSTSVLHSEMELSIFDQVQVPHPSQTTNKERYMMLMDGIKYVLGSVTRVNAEKAGDIIKDYNVPVNLTEREMNRAKAFCNGWQSVXLNESGRKLVMHSAGGEFQLK.

In terms of biological role, plasmid partition require REP1, REP2, and a cis-acting DNA sequence (known as STB). The sequence is that of Trans-acting factor C (C) from Zygosaccharomyces bisporus.